A 152-amino-acid chain; its full sequence is Probable prefoldin subunit 5 (152 aa).

Belongs to the prefoldin subunit alpha family. In terms of assembly, heterohexamer of two PFD-alpha type and four PFD-beta type subunits.

Binds specifically to cytosolic chaperonin (c-CPN) and transfers target proteins to it. Binds to nascent polypeptide chain and promotes folding in an environment in which there are many competing pathways for nonnative proteins. The sequence is that of Probable prefoldin subunit 5 (pfd-5) from Caenorhabditis elegans.